Consider the following 479-residue polypeptide: Ribosomal RNA small subunit methyltransferase F (479 aa).

S-adenosyl-L-methionine is bound by residues 125–131, Glu-149, Asp-176, and Asp-194; that span reads AAAPGSK. Residue Cys-247 is the Nucleophile of the active site.

It belongs to the class I-like SAM-binding methyltransferase superfamily. RsmB/NOP family.

Its subcellular location is the cytoplasm. The catalysed reaction is cytidine(1407) in 16S rRNA + S-adenosyl-L-methionine = 5-methylcytidine(1407) in 16S rRNA + S-adenosyl-L-homocysteine + H(+). Its function is as follows. Specifically methylates the cytosine at position 1407 (m5C1407) of 16S rRNA. The sequence is that of Ribosomal RNA small subunit methyltransferase F from Salmonella enteritidis PT4 (strain P125109).